The sequence spans 354 residues: Guanine nucleotide-binding protein G(i) subunit alpha-3 (354 aa).

Glycine 2 carries N-myristoyl glycine lipidation. The S-palmitoyl cysteine moiety is linked to residue cysteine 3. A G-alpha domain is found at 32 to 354 (KEVKLLLLGA…KNNLKECGLY (323 aa)). The interval 35–48 (KLLLLGAGESGKST) is G1 motif. GTP is bound by residues glycine 42, glutamate 43, serine 44, glycine 45, lysine 46, serine 47, threonine 48, aspartate 150, serine 151, leucine 175, arginine 176, threonine 177, arginine 178, valine 179, lysine 180, threonine 181, valine 201, glycine 203, asparagine 269, lysine 270, aspartate 272, leucine 273, cysteine 325, alanine 326, and threonine 327. Mg(2+) is bound at residue serine 47. Positions 173–181 (DVLRTRVKT) are G2 motif. Residue threonine 181 coordinates Mg(2+). Positions 196–205 (FKMFDVGGQR) are G3 motif. Positions 265–272 (ILFLNKKD) are G4 motif. The G5 motif stretch occupies residues 324 to 329 (TCATDT).

The protein belongs to the G-alpha family. G(i/o/t/z) subfamily. As to quaternary structure, heterotrimeric G proteins are composed of 3 units; alpha, beta and gamma. The alpha subunit contains the guanine nucleotide binding site. GTP binding causes dissociation of the heterotrimer, liberating the individual subunits so that they can interact with downstream effector proteins. Forms a complex with CCDC88A/GIV and EGFR which leads to enhanced EGFR signaling and triggering of cell migration; ligand stimulation is required for recruitment of GNAI3 to the complex. Interacts (inactive GDP-bound form) with CCDC88A/GIV (via GBA motif); the interaction leads to activation of GNAI3. Interacts (inactive GDP-bound form) with CCDC88C/DAPLE (via GBA motif); the interaction leads to activation of GNAI3. Interacts (inactive GDP-bound form) with NUCB1 (via GBA motif) and NUCB2 (via GBA motif); the interaction leads to activation of GNAI3. Interacts (inactive GDP-bound form) with PLCD4 (via GBA motif); the interaction leads to activation of GNAI3. Interacts with INSR; the interaction is probably mediated by CCDC88A/GIV. Interacts with GPSM1. Interacts (GDP-bound form) with GPSM2 (via GoLoco domains). Does not interact with RGS2. Interacts with RGS8 and RGS10; this strongly enhances the intrinsic GTPase activity. Interacts with RGS12. Interacts with RGS16; this strongly enhances the intrinsic GTPase activity. Interacts (via active GTP- or inactive GDP-bound form) with RGS14. Interacts (via active GTP-bound form) with TRPC5 (via ANK repeats) in a homotetrameric ion channel; the interaction is direct and activates the channel activity. As to expression, ubiquitous.

It localises to the cytoplasm. The protein localises to the cell membrane. It is found in the cytoskeleton. Its subcellular location is the microtubule organizing center. The protein resides in the centrosome. Its function is as follows. Heterotrimeric guanine nucleotide-binding proteins (G proteins) function as transducers downstream of G protein-coupled receptors (GPCRs) in numerous signaling cascades. The alpha chain contains the guanine nucleotide binding site and alternates between an active, GTP-bound state and an inactive, GDP-bound state. Signaling by an activated GPCR promotes GDP release and GTP binding. The alpha subunit has a low GTPase activity that converts bound GTP to GDP, thereby terminating the signal. Both GDP release and GTP hydrolysis are modulated by numerous regulatory proteins. Signaling is mediated via effector proteins, such as adenylate cyclase. Inhibits adenylate cyclase activity, leading to decreased intracellular cAMP levels. Stimulates the activity of receptor-regulated K(+) channels. The active GTP-bound form prevents the association of RGS14 with centrosomes and is required for the translocation of RGS14 from the cytoplasm to the plasma membrane. May play a role in cell division. The active GTP-bound form activates the calcium permeant TRPC5 ion channels. The chain is Guanine nucleotide-binding protein G(i) subunit alpha-3 (Gnai3) from Rattus norvegicus (Rat).